The primary structure comprises 549 residues: Indole-3-acetic acid-amido synthetase GH3.2 (549 aa).

The protein belongs to the IAA-amido conjugating enzyme family. In terms of tissue distribution, expressed in flowers, pollen, cotyledons, stipules, true leaves, hypocotyls, and all parts of the roots except for the primary root tips.

Catalyzes the synthesis of indole-3-acetic acid (IAA)-amino acid conjugates, providing a mechanism for the plant to cope with the presence of excess auxin. Strongly reactive with Glu, Gln, Trp, Asp, Ala, Leu, Phe, Gly, Tyr, Met, Ile and Val. Little or no product formation with His, Ser, Thr, Arg, Lys, or Cys. Also active on pyruvic and butyric acid analogs of IAA, PAA and the synthetic auxin naphthaleneacetic acid (NAA). The two chlorinated synthetic auxin herbicides 2,4-D and 3,6-dichloro-o-anisic acid (dicamba) cannot be used as substrates. This is Indole-3-acetic acid-amido synthetase GH3.2 (GH3.2) from Arabidopsis thaliana (Mouse-ear cress).